A 657-amino-acid chain; its full sequence is Tyramine beta-hydroxylase (657 aa).

A helical transmembrane segment spans residues 77–97 (VALLFLLVAYCGGVVHAGEIV). The 112-residue stretch at 103–214 (TNVTVKWHTD…GTTQFYIAAS (112 aa)) folds into the DOMON domain. Residues Asn-104 and Asn-143 are each glycosylated (N-linked (GlcNAc...) asparagine). Tyr-278 is a catalytic residue. Disulfide bonds link Cys-280-Cys-330 and Cys-319-Cys-342. 2 residues coordinate Cu(2+): His-312 and His-313. Cu(2+) contacts are provided by His-380, His-458, His-460, and Met-533. 3 cysteine pairs are disulfide-bonded: Cys-437–Cys-549, Cys-441–Cys-606, and Cys-512–Cys-534. His-458 is an active-site residue. Asn-555 is a glycosylation site (N-linked (GlcNAc...) asparagine).

Belongs to the copper type II ascorbate-dependent monooxygenase family. Requires Cu(2+) as cofactor. As to expression, present in synaptic regions of RIC interneurons. Present in gonadal sheath cells of hermaphrodites (at protein level).

It localises to the membrane. It catalyses the reaction tyramine + L-ascorbate + O2 = (R)-octopamine + L-dehydroascorbate + H2O. In terms of biological role, required for the conversion of tyramine to octopamine, a precursor of octapamine but probably itself a neurotransmitter. Involved in the regulation of egg laying, which is inhibited by tyramine. Due to its involvement in octopamine biosynthesis, also required for crtc-1-dependent regulation of AMPK-mediated longevity. In Caenorhabditis elegans, this protein is Tyramine beta-hydroxylase.